The following is a 92-amino-acid chain: Small ribosomal subunit protein bS18A (92 aa).

Belongs to the bacterial ribosomal protein bS18 family. In terms of assembly, part of the 30S ribosomal subunit. Forms a tight heterodimer with protein bS6.

Its function is as follows. Binds as a heterodimer with protein bS6 to the central domain of the 16S rRNA, where it helps stabilize the platform of the 30S subunit. This Cupriavidus pinatubonensis (strain JMP 134 / LMG 1197) (Cupriavidus necator (strain JMP 134)) protein is Small ribosomal subunit protein bS18A.